Consider the following 705-residue polypeptide: MSIPVILNKSNSNISTVNTIVENTIKNIFIDDNNIYVTDSNDILYLYNNYQFYPFTSKMKRIQNCFMIDSETFIVHHSSTISIFDKNYVKIDQEVDTWITNNIDRVAYDIDFGLVATLENGDIYVNFGVGNNENNYGSSDINRLCLNTICSDNNKYLRTKFHSYEDMKIISKTLIAHKENTIDIFFLYTNTVKYIRSAYIDSESFGKIIEFNSILNYFVSTDFNPYFLTETPEIYKDTNNFFFPKIPYYFSIIDNNLYCYHTKNYYDKLIPPLMSILSVSTNTTTILPHNNWLTVLVLPENSSSKIVFTSIENQVLIHNGQFYSIKNDYQHIVFDEILINYDTINSMYIDKSNVEFVIDIEQDVPVIDQLINIIPNIYRLNNKYIYYFEQIDKKGSIVSYGDGVSRFVFNSLRREIDEILATKFEYCDTGMAIKLGKMMYFCNVDGSETFENIHPYFFFTMSKESDYTYLLKKFKSASYNIYYNQWIQYKNNPQTLVELGLGLNNSNDYIRYLMTSDLNEEQINLYNNFIDGYLFFMNRTSIYDIVKNYPISYYVNKLLFEGYFELSVQFRKESDDVNDNDYDEFCALFDNIFKELSHREMSCISQNVTGSNYYVGEITVVYSFTNNKLQKQVYDGSTIIPEEEGVSAVENPIESIDTTDNYDDSDISYQISTCNTELVVNIPPNENLIRKLFDILVVEDTYLKN.

This is an uncharacterized protein from Acanthamoeba polyphaga (Amoeba).